Here is a 105-residue protein sequence, read N- to C-terminus: Large ribosomal subunit protein eL36 (105 aa).

This sequence belongs to the eukaryotic ribosomal protein eL36 family. Component of the large ribosomal subunit.

The protein resides in the cytoplasm. It is found in the cytosol. In terms of biological role, component of the large ribosomal subunit. The ribosome is a large ribonucleoprotein complex responsible for the synthesis of proteins in the cell. This chain is Large ribosomal subunit protein eL36 (rpl36), found in Danio rerio (Zebrafish).